We begin with the raw amino-acid sequence, 176 residues long: Peptide deformylase 1 (176 aa).

Positions 99 and 141 each coordinate Fe cation. Residue Glu142 is part of the active site. His145 is a Fe cation binding site.

It belongs to the polypeptide deformylase family. The cofactor is Fe(2+).

The catalysed reaction is N-terminal N-formyl-L-methionyl-[peptide] + H2O = N-terminal L-methionyl-[peptide] + formate. Functionally, removes the formyl group from the N-terminal Met of newly synthesized proteins. Requires at least a dipeptide for an efficient rate of reaction. N-terminal L-methionine is a prerequisite for activity but the enzyme has broad specificity at other positions. The sequence is that of Peptide deformylase 1 from Nitrosomonas europaea (strain ATCC 19718 / CIP 103999 / KCTC 2705 / NBRC 14298).